A 212-amino-acid polypeptide reads, in one-letter code: Eggshell protein 1 (212 aa).

Residues 1 to 27 (MKSSLTLLFLAAIGYTIAYPPPSDYDS) form the signal peptide. The segment at 155-212 (RKNGHGKGGKGGNGGGGGKGGGKGGGNGKGNGKGGGGKNGGGKGGNGGKGGSYAPSYY) is disordered. Gly residues predominate over residues 163–205 (GKGGNGGGGGKGGGKGGGNGKGNGKGGGGKNGGGKGGNGGKGG).

Detected only in mature female parasites.

The protein is Eggshell protein 1 (ESG-1) of Schistosoma japonicum (Blood fluke).